A 551-amino-acid chain; its full sequence is Rqc2 homolog RqcH (551 aa).

A required for fibronectin binding region spans residues tyrosine 363–serine 551.

The protein belongs to the NEMF family. In terms of assembly, associates with stalled 50S ribosomal subunits, binds to RqcP. Interacts with human fibronectin.

It localises to the cell surface. Its subcellular location is the cytoplasm. Key component of the ribosome quality control system (RQC), a ribosome-associated complex that mediates the extraction of incompletely synthesized nascent chains from stalled ribosomes and their subsequent degradation. RqcH recruits Ala-charged tRNA, and with RqcP directs the elongation of stalled nascent chains on 50S ribosomal subunits, leading to non-templated C-terminal alanine extensions (Ala tail). The Ala tail promotes nascent chain degradation. May add between 1 and at least 8 Ala residues. Binds to stalled 50S ribosomal subunits. In terms of biological role, recombinant protein binds to immobilized human fibronectin; binding is saturable and competed by heparin. Recombinant protein inhibits binding of whole cells to fibronectin. This Streptococcus pneumoniae (strain ATCC BAA-255 / R6) protein is Rqc2 homolog RqcH.